The sequence spans 253 residues: Triosephosphate isomerase (253 aa).

9-11 lines the substrate pocket; that stretch reads NWK. H96 (electrophile) is an active-site residue. The Proton acceptor role is filled by E169. Substrate-binding positions include G175, S215, and 236–237; that span reads GG.

This sequence belongs to the triosephosphate isomerase family. In terms of assembly, homodimer.

The protein localises to the cytoplasm. The catalysed reaction is D-glyceraldehyde 3-phosphate = dihydroxyacetone phosphate. It participates in carbohydrate biosynthesis; gluconeogenesis. It functions in the pathway carbohydrate degradation; glycolysis; D-glyceraldehyde 3-phosphate from glycerone phosphate: step 1/1. Involved in the gluconeogenesis. Catalyzes stereospecifically the conversion of dihydroxyacetone phosphate (DHAP) to D-glyceraldehyde-3-phosphate (G3P). In Borreliella burgdorferi (strain ZS7) (Borrelia burgdorferi), this protein is Triosephosphate isomerase.